The following is a 341-amino-acid chain: MKVSDFYYDLPQELIAQEPVEKRDMSRLMVLDKETGKISHKRFKDIVEYINKGDCLVLNDTRVIPARLLGEKEGTGGKIEFVLLKRINGDVWEVILKPGKKAKPGARFVFGNGELKAEVIEIVEEGNRLVRFEYDGIFEEILDRIGIVPLPPYITKKLDDAERYQTVYSRYKGSAAAPTAGLHFTLELLEELAGRGVKIAYVTLHVGLGTFRPVKVENLEEHKMHSEFYRIKEEDCDKINSTKQNGGKIIAVGTTSCRVLETVGDENGIVRPQSGWTDIFIYPGYKFKVVDSLITNFHLPESTLIMLVSALAGREKILEAYNIAVKERYRFFSFGDAMFIK.

Belongs to the QueA family. In terms of assembly, monomer.

It is found in the cytoplasm. The enzyme catalyses 7-aminomethyl-7-carbaguanosine(34) in tRNA + S-adenosyl-L-methionine = epoxyqueuosine(34) in tRNA + adenine + L-methionine + 2 H(+). It functions in the pathway tRNA modification; tRNA-queuosine biosynthesis. Its function is as follows. Transfers and isomerizes the ribose moiety from AdoMet to the 7-aminomethyl group of 7-deazaguanine (preQ1-tRNA) to give epoxyqueuosine (oQ-tRNA). This is S-adenosylmethionine:tRNA ribosyltransferase-isomerase from Acetivibrio thermocellus (strain ATCC 27405 / DSM 1237 / JCM 9322 / NBRC 103400 / NCIMB 10682 / NRRL B-4536 / VPI 7372) (Clostridium thermocellum).